Reading from the N-terminus, the 399-residue chain is Acetylornithine aminotransferase (399 aa).

Residues 99 to 100 (GA) and Phe-132 each bind pyridoxal 5'-phosphate. Arg-135 lines the N(2)-acetyl-L-ornithine pocket. 217 to 220 (DEVQ) is a binding site for pyridoxal 5'-phosphate. An N6-(pyridoxal phosphate)lysine modification is found at Lys-246. A N(2)-acetyl-L-ornithine-binding site is contributed by Thr-274. A pyridoxal 5'-phosphate-binding site is contributed by Thr-275.

It belongs to the class-III pyridoxal-phosphate-dependent aminotransferase family. ArgD subfamily. Homodimer. Requires pyridoxal 5'-phosphate as cofactor.

It localises to the cytoplasm. The enzyme catalyses N(2)-acetyl-L-ornithine + 2-oxoglutarate = N-acetyl-L-glutamate 5-semialdehyde + L-glutamate. It participates in amino-acid biosynthesis; L-arginine biosynthesis; N(2)-acetyl-L-ornithine from L-glutamate: step 4/4. The polypeptide is Acetylornithine aminotransferase (Agrobacterium fabrum (strain C58 / ATCC 33970) (Agrobacterium tumefaciens (strain C58))).